The following is a 262-amino-acid chain: MSVVSMKQLLEAGVHFGHQTRRWNPKMEEYIFTERNGIYIIDLQKTVKLIDTAYNYMKDVAANDGVALFVGTKKQAQDAIEEEATRAGQYYVNHRWLGGTLTNWKTIQSRIARLKELKKMSEDGTFDVLPKKEVAVLTKQREKLERFLGGIEDMPRIPDVMFIVDPHKEQIAVKEAQKLHIPIVAMVDTNTDPDDIDYVIPSNDDAIRAVRLITSKMADAFVEGKQGQDDAQQETADDNAANETVSEDSLKNLKNSVEGKED.

The interval 224-262 (GKQGQDDAQQETADDNAANETVSEDSLKNLKNSVEGKED) is disordered.

The protein belongs to the universal ribosomal protein uS2 family.

The protein is Small ribosomal subunit protein uS2 of Limosilactobacillus reuteri (strain DSM 20016) (Lactobacillus reuteri).